The sequence spans 248 residues: MSFVVIIPARYASTRLPGKPLVDINGKPMIVHVLERARESGAERIIVATDHEDVARAVEVAGGEVCMTRADHQSGTERLAEVVEKCAFSDDTVIVNVQGDEPMIPATIIRQVADNLAQRQVGMATLAVPIHNAEEAFNPNAVKVVLDAEGYALYFSRATIPWDRDRFAKDLETVGDNFLRHLGIYGYRAGFIRRYVTWQPSPLEHIEMLEQLRVLWYGEKIHVAVAQEVPGTGVDTPEDLKRVRAEMR.

The protein belongs to the KdsB family.

It is found in the cytoplasm. The catalysed reaction is 3-deoxy-alpha-D-manno-oct-2-ulosonate + CTP = CMP-3-deoxy-beta-D-manno-octulosonate + diphosphate. The protein operates within nucleotide-sugar biosynthesis; CMP-3-deoxy-D-manno-octulosonate biosynthesis; CMP-3-deoxy-D-manno-octulosonate from 3-deoxy-D-manno-octulosonate and CTP: step 1/1. Its pathway is bacterial outer membrane biogenesis; lipopolysaccharide biosynthesis. Activates KDO (a required 8-carbon sugar) for incorporation into bacterial lipopolysaccharide in Gram-negative bacteria. This Escherichia coli O6:H1 (strain CFT073 / ATCC 700928 / UPEC) protein is 3-deoxy-manno-octulosonate cytidylyltransferase.